A 166-amino-acid chain; its full sequence is Ribosome maturation factor RimP (166 aa).

This sequence belongs to the RimP family.

Its subcellular location is the cytoplasm. Functionally, required for maturation of 30S ribosomal subunits. This is Ribosome maturation factor RimP from Psychrobacter cryohalolentis (strain ATCC BAA-1226 / DSM 17306 / VKM B-2378 / K5).